Consider the following 402-residue polypeptide: Multidrug resistance protein MdtH (402 aa).

Residues 1 to 12 are Cytoplasmic-facing; that stretch reads MSRVSQARNLGK. Residues 13–33 form a helical membrane-spanning segment; it reads YFLLIDNMLVVLGFFVVFPLI. The Periplasmic portion of the chain corresponds to 34-98; the sequence is SIRFVDQMGW…GFATMGIAHE (65 aa). A helical membrane pass occupies residues 99 to 116; sequence PWLLWFSCLLSGLGGTLF. Residues 117-138 are Cytoplasmic-facing; that stretch reads DPPRSALVVKLIRPQQRGRFFS. The chain crosses the membrane as a helical span at residues 139–159; that stretch reads LLMMQDSAGAVIGALLGSWLL. The Periplasmic portion of the chain corresponds to 160–164; that stretch reads QYDFR. Residues 165–185 traverse the membrane as a helical segment; the sequence is LVCATGAVLFVLCAAFNAWLL. Topologically, residues 186 to 213 are cytoplasmic; it reads PAWKLSTVRTPVREGMTRVMRDKRFVTY. A helical membrane pass occupies residues 214–234; it reads VLTLAGYYMLAVQVMLMLPIM. At 235-243 the chain is on the periplasmic side; the sequence is VNDVAGAPS. The helical transmembrane segment at 244–264 threads the bilayer; it reads AVKWMYAIEACLSLTLLYPIA. Topologically, residues 265-276 are cytoplasmic; sequence RWSEKHFRLEHR. Residues 277–297 form a helical membrane-spanning segment; it reads LMAGLLIMSLSMMPVGMVSGL. Topologically, residues 298–299 are periplasmic; that stretch reads QQ. Residues 300 to 320 form a helical membrane-spanning segment; the sequence is LFTLICLFYIGSIIAEPARET. The Cytoplasmic portion of the chain corresponds to 321–339; sequence LSASLADARARGSYMGFSR. Residues 340 to 360 traverse the membrane as a helical segment; that stretch reads LGLAIGGAIGYIGGGWLFDLG. Residues 361–367 lie on the Periplasmic side of the membrane; the sequence is KSVHQPE. A helical transmembrane segment spans residues 368–388; it reads LPWMMLGIIGIFTFLALGWQF. Over 389–402 the chain is Cytoplasmic; the sequence is SQKRAARRLLERDA.

Belongs to the major facilitator superfamily. DHA1 family. MdtH (TC 2.A.1.2.21) subfamily.

It localises to the cell inner membrane. Confers resistance to norfloxacin and enoxacin. The chain is Multidrug resistance protein MdtH from Escherichia coli O157:H7.